We begin with the raw amino-acid sequence, 476 residues long: MADFFTEKPVATNVAEFSVSEIANALKRVVEDKFGYVRIRGEISGYRGAHASGHAYFALKDDKARLEAVIWLSVMKKLSFPPEEGMEVIAVGKLTTYPGSSKYQIVIEALEPTGVGALMTLLENRKKKLAEEGLFDAANKKPLPYMPKIIGVVTSPTGAVIRDIIHRIFDRFPLHILVWPVRVQGETCGREVASAVEGFNALFLGGGIPKPDLIIVARGGGSLEDLWGFNDEAVVRAVYASAIPVISAVGHETDWTLIDYAADWRAPTPTGAAERAVPVKLDIEVHLASINSRFRVGLARYFDFHQQKLRALVRGLPTVDQLFALPRRGFDEISSRLQRALCVSYDKKCFYFHALSLRFSPRLLNTKKAQYAIQEYTGRLHRAFLRNVEKQRAQVEMACRLLKSTSYQNILERGFVLALGKDHKPIKRLMQLPETGQISLRFFDGEIDVSTHDRAVNRSLKNKRIKSQKDDQGLLF.

The protein belongs to the XseA family. As to quaternary structure, heterooligomer composed of large and small subunits.

Its subcellular location is the cytoplasm. The enzyme catalyses Exonucleolytic cleavage in either 5'- to 3'- or 3'- to 5'-direction to yield nucleoside 5'-phosphates.. Functionally, bidirectionally degrades single-stranded DNA into large acid-insoluble oligonucleotides, which are then degraded further into small acid-soluble oligonucleotides. The polypeptide is Exodeoxyribonuclease 7 large subunit (Bartonella bacilliformis (strain ATCC 35685 / KC583 / Herrer 020/F12,63)).